The chain runs to 238 residues: Ribosomal RNA small subunit methyltransferase E 1 (238 aa).

The protein belongs to the RNA methyltransferase RsmE family.

The protein resides in the cytoplasm. The catalysed reaction is uridine(1498) in 16S rRNA + S-adenosyl-L-methionine = N(3)-methyluridine(1498) in 16S rRNA + S-adenosyl-L-homocysteine + H(+). Functionally, specifically methylates the N3 position of the uracil ring of uridine 1498 (m3U1498) in 16S rRNA. Acts on the fully assembled 30S ribosomal subunit. The polypeptide is Ribosomal RNA small subunit methyltransferase E 1 (rsmE1) (Borreliella burgdorferi (strain ATCC 35210 / DSM 4680 / CIP 102532 / B31) (Borrelia burgdorferi)).